Here is a 194-residue protein sequence, read N- to C-terminus: Ion-translocating oxidoreductase complex subunit A (194 aa).

The next 6 membrane-spanning stretches (helical) occupy residues 4-24, 39-59, 72-92, 102-122, 135-155, and 172-192; these read LVLI…QFLG, IGLA…SYLL, LRTI…EMLV, VLGI…VALL, GING…FAAM, and AIGL…SGLI.

It belongs to the NqrDE/RnfAE family. As to quaternary structure, the complex is composed of six subunits: RnfA, RnfB, RnfC, RnfD, RnfE and RnfG.

The protein localises to the cell inner membrane. Part of a membrane-bound complex that couples electron transfer with translocation of ions across the membrane. The polypeptide is Ion-translocating oxidoreductase complex subunit A (Azotobacter vinelandii (strain DJ / ATCC BAA-1303)).